Here is a 129-residue protein sequence, read N- to C-terminus: uncharacterized protein (129 aa).

An Isoglutamyl lysine isopeptide (Lys-Gln) (interchain with Q-Cter in protein Pup) cross-link involves residue K121.

This is an uncharacterized protein from Mycolicibacterium smegmatis (strain ATCC 700084 / mc(2)155) (Mycobacterium smegmatis).